The sequence spans 264 residues: Zinc transporter ZupT (264 aa).

The next 5 membrane-spanning stretches (helical) occupy residues 8 to 28 (AFIL…IAFV), 36 to 56 (FLSV…MIEI), 75 to 95 (WLTV…DKLI), 121 to 141 (GLMT…ATFI), and 148 to 168 (SIAI…GIAV). Fe(2+) contacts are provided by asparagine 132 and glutamate 135. Zn(2+)-binding residues include glutamate 135 and histidine 160. Residues asparagine 161, glutamate 164, and glutamate 193 each coordinate Fe(2+). Position 164 (glutamate 164) interacts with Zn(2+). 3 helical membrane-spanning segments follow: residues 197–217 (AIIG…GAIF), 219–239 (AVAG…AEEY), and 244–264 (LAIY…LLFI).

The protein belongs to the ZIP transporter (TC 2.A.5) family. ZupT subfamily.

It localises to the cell membrane. The catalysed reaction is Zn(2+)(in) = Zn(2+)(out). Its function is as follows. Mediates zinc uptake. May also transport other divalent cations. The sequence is that of Zinc transporter ZupT from Streptococcus mutans serotype c (strain ATCC 700610 / UA159).